Here is a 282-residue protein sequence, read N- to C-terminus: Elongation factor Ts (282 aa).

The tract at residues 79 to 82 (TDFV) is involved in Mg(2+) ion dislocation from EF-Tu.

It belongs to the EF-Ts family.

The protein localises to the cytoplasm. In terms of biological role, associates with the EF-Tu.GDP complex and induces the exchange of GDP to GTP. It remains bound to the aminoacyl-tRNA.EF-Tu.GTP complex up to the GTP hydrolysis stage on the ribosome. This chain is Elongation factor Ts, found in Shewanella woodyi (strain ATCC 51908 / MS32).